Consider the following 1437-residue polypeptide: Myomesin-3 (1437 aa).

Positions 1-49 (MTLPHSLGGAGDPRPPQAMEVHRLEHRQEEEQKEERQHSLRMGSSVRRR) are disordered. Residues 20 to 38 (EVHRLEHRQEEEQKEERQH) show a composition bias toward basic and acidic residues. Positions 120-149 (RLLRQRRDWKTLRRRTEEKVQEAKELRELC) form a coiled coil. 2 Ig-like C2-type domains span residues 154–246 (PWFW…AKVL) and 269–361 (PSVE…TYVL). Fibronectin type-III domains follow at residues 375–469 (SPLN…VMGD), 503–598 (PPTN…LRGP), 604–696 (PPAQ…VKQA), 702–797 (APYG…CKEW), and 804–899 (PPYD…LEDK). 2 Ig-like C2-type domains span residues 1120 to 1205 (PYFE…LDLT) and 1334 to 1423 (AKVV…VTIS).

In terms of assembly, homodimer.

It localises to the cytoplasm. It is found in the myofibril. The protein resides in the sarcomere. The protein localises to the m line. Functionally, may link the intermediate filament cytoskeleton to the M-disk of the myofibrils in striated muscle. The polypeptide is Myomesin-3 (MYOM3) (Homo sapiens (Human)).